The sequence spans 347 residues: MLSLIKLQRVFNVHQVPKAFHEDGIISGYRHPRSSATECVWSLFQLTNETLNVWTHFLPTWYFLWKLMTVLLMEDVWNEAYTWPLLVFLFSCCVYPLASSCAHTFSSMSTRARHICYFFDYGALSFYSLGSAISYSAYVFPDAWLSSSFHAYYISVAVFNTVLSTSLACYSRLGLPLLHYSHDIVERFSERQCPRMSKVLRILAFAYPYLFDNIPLFYRLFVCVGEGCTDNEANSVHVQHTLLAFLTSFLFATHLPERLAPGRFDYIGHSHQLFHVCAIIGTHFQMKAIEMDMGLRRSQLLASAPAISFNNTIGAALLCVSVSLGIICVYSLPLLYSSNPKNTANKE.

Topologically, residues 1–52 (MLSLIKLQRVFNVHQVPKAFHEDGIISGYRHPRSSATECVWSLFQLTNETLN) are cytoplasmic. A helical transmembrane segment spans residues 53-73 (VWTHFLPTWYFLWKLMTVLLM). Residues 74 to 81 (EDVWNEAY) lie on the Extracellular side of the membrane. A helical membrane pass occupies residues 82–102 (TWPLLVFLFSCCVYPLASSCA). The Cytoplasmic segment spans residues 103 to 114 (HTFSSMSTRARH). Residues 115–135 (ICYFFDYGALSFYSLGSAISY) form a helical membrane-spanning segment. At 136–138 (SAY) the chain is on the extracellular side. The helical transmembrane segment at 139-159 (VFPDAWLSSSFHAYYISVAVF) threads the bilayer. Topologically, residues 160 to 201 (NTVLSTSLACYSRLGLPLLHYSHDIVERFSERQCPRMSKVLR) are cytoplasmic. Residues 202–222 (ILAFAYPYLFDNIPLFYRLFV) traverse the membrane as a helical segment. Over 223–235 (CVGEGCTDNEANS) the chain is Extracellular. The helical transmembrane segment at 236-256 (VHVQHTLLAFLTSFLFATHLP) threads the bilayer. Residues 257–314 (ERLAPGRFDYIGHSHQLFHVCAIIGTHFQMKAIEMDMGLRRSQLLASAPAISFNNTIG) are Cytoplasmic-facing. Residues 315-335 (AALLCVSVSLGIICVYSLPLL) traverse the membrane as a helical segment. Over 336–347 (YSSNPKNTANKE) the chain is Extracellular.

This sequence belongs to the ADIPOR family.

Its subcellular location is the membrane. Steroid membrane receptor. Binds progesterone. May be involved in oocyte maturation. The protein is Membrane progestin receptor gamma-B of Danio rerio (Zebrafish).